Reading from the N-terminus, the 300-residue chain is GTPase Era (300 aa).

The region spanning 5 to 176 is the Era-type G domain; that stretch reads HSGFVCLVGR…IDVLAAALPA (172 aa). Residues 13-20 are G1; sequence GRPNTGKS. 13-20 contacts GTP; the sequence is GRPNTGKS. Residues 39–43 form a G2 region; it reads QTTRH. The tract at residues 60–63 is G3; sequence DTPG. GTP contacts are provided by residues 60–64 and 125–128; these read DTPGL and TKID. A G4 region spans residues 125-128; sequence TKID. Positions 155–157 are G5; sequence VSA. One can recognise a KH type-2 domain in the interval 207–286; it reads VRDELPHSLA…YLDLRVKVAK (80 aa).

This sequence belongs to the TRAFAC class TrmE-Era-EngA-EngB-Septin-like GTPase superfamily. Era GTPase family. Monomer.

The protein resides in the cell envelope. It is found in the secreted. Its subcellular location is the cell wall. Exhibits GTPase activity. Binds RNA but is probably not involved in ribosome assembly in mycobacteria. This Mycobacterium bovis (strain ATCC BAA-935 / AF2122/97) protein is GTPase Era.